A 130-amino-acid polypeptide reads, in one-letter code: DNA-directed RNA polymerase subunit omega (130 aa).

The disordered stretch occupies residues 110–130 (EELLKGLEGLAPPEEQPEEDE).

Belongs to the RNA polymerase subunit omega family. In terms of assembly, the RNAP catalytic core consists of 2 alpha, 1 beta, 1 beta' and 1 omega subunit. When a sigma factor is associated with the core the holoenzyme is formed, which can initiate transcription.

It catalyses the reaction RNA(n) + a ribonucleoside 5'-triphosphate = RNA(n+1) + diphosphate. In terms of biological role, promotes RNA polymerase assembly. Latches the N- and C-terminal regions of the beta' subunit thereby facilitating its interaction with the beta and alpha subunits. The polypeptide is DNA-directed RNA polymerase subunit omega (Bradyrhizobium sp. (strain BTAi1 / ATCC BAA-1182)).